A 402-amino-acid chain; its full sequence is Putative F-box/kelch-repeat protein At1g61540 (402 aa).

One can recognise an F-box domain in the interval Pro24 to Arg70. Kelch repeat units lie at residues Asn135 to Asp189, Lys191 to Ser240, and Lys246 to Asn293.

This chain is Putative F-box/kelch-repeat protein At1g61540, found in Arabidopsis thaliana (Mouse-ear cress).